A 536-amino-acid chain; its full sequence is MELQRNFFIFAFLFVSFLLWQAWQSQSLKKNKKNEETNSFFHLNHKKEDKNQIIIKNDVLRLVINMYGGDIEEASLLDYKTQLNSPENLKLLETKSDFVYQAQSGLIGKDGLDNSINKIRPLYSAKKNFFELGHNEKELRVPITFIAKNGITYIKNFILKPGKYNVEVEYDINNLSNKKLELNIFGQLKQTVKLPKNRDIYSGNFALQTFRGAAYSSSDAKYEKYKFDNIANHEHLHIITHHGWIAMLQQYFVVAWVPDTNISSSNIIYTSYLDNDGIAIIGYKSSLINIPSNSRYIIKSKLWIGPEKQQEMALVAPNLDLTVDYGFLWFLSQPLFKLLSTIHNFIGNWGFSIILITFMMKAITYPLTKAQYTSMSKMRELQPKINELKKNFGHDKQRMSKEIMALYKKEKINPLGGCLPVFIQMPIFLSLYYMLIGSVELRHAPFLFWIKDLSDQDPYYVLPIFMGLTMFFIQRTSSNNISDPFQQKIMHFMPFIFTVFFLWFPSGLVLYYIVSNLVTIIQQKYILSNFKKNQKR.

Helical transmembrane passes span 7–27 (FFIF…QSQS), 338–358 (LLST…LITF), 419–439 (LPVF…IGSV), 453–473 (LSDQ…MFFI), and 494–514 (PFIF…YYIV).

This sequence belongs to the OXA1/ALB3/YidC family. Type 1 subfamily. In terms of assembly, interacts with the Sec translocase complex via SecD. Specifically interacts with transmembrane segments of nascent integral membrane proteins during membrane integration.

It localises to the cell membrane. Functionally, required for the insertion and/or proper folding and/or complex formation of integral membrane proteins into the membrane. Involved in integration of membrane proteins that insert both dependently and independently of the Sec translocase complex, as well as at least some lipoproteins. Aids folding of multispanning membrane proteins. The polypeptide is Membrane protein insertase YidC (Buchnera aphidicola subsp. Schizaphis graminum (strain Sg)).